The chain runs to 1046 residues: uncharacterized protein (1046 aa).

Low complexity predominate over residues 594–615; sequence LNSIPSDSSSSGSSRKSSPRGS. The interval 594 to 622 is disordered; it reads LNSIPSDSSSSGSSRKSSPRGSPNLGEAP.

This is an uncharacterized protein from Invertebrate iridescent virus 6 (IIV-6).